Reading from the N-terminus, the 224-residue chain is UPF0173 metal-dependent hydrolase STH3160 (224 aa).

The protein belongs to the UPF0173 family.

This Symbiobacterium thermophilum (strain DSM 24528 / JCM 14929 / IAM 14863 / T) protein is UPF0173 metal-dependent hydrolase STH3160.